Consider the following 305-residue polypeptide: Homoserine O-acetyltransferase (305 aa).

Cysteine 142 functions as the Acyl-thioester intermediate in the catalytic mechanism. The substrate site is built by lysine 163 and serine 192. Histidine 235 serves as the catalytic Proton acceptor. The active site involves glutamate 237. Arginine 249 is a substrate binding site.

Belongs to the MetA family.

It is found in the cytoplasm. It catalyses the reaction L-homoserine + acetyl-CoA = O-acetyl-L-homoserine + CoA. Its pathway is amino-acid biosynthesis; L-methionine biosynthesis via de novo pathway; O-acetyl-L-homoserine from L-homoserine: step 1/1. In terms of biological role, transfers an acetyl group from acetyl-CoA to L-homoserine, forming acetyl-L-homoserine. The polypeptide is Homoserine O-acetyltransferase (Hyphomonas neptunium (strain ATCC 15444)).